The chain runs to 2890 residues: Bifunctional DNA-directed RNA polymerase subunit beta-beta' (2890 aa).

The segment at 1–1377 (MSKKIPLKNR…DINIFGDDVD (1377 aa)) is DNA-directed RNA polymerase subunit beta. A DNA-directed RNA polymerase subunit beta' region spans residues 1384–2890 (PIMIKEDDRP…LRALEDNSKF (1507 aa)). Zn(2+) contacts are provided by C1449, C1451, C1465, and C1468. Residues D1849, D1851, and D1853 each contribute to the Mg(2+) site. The Zn(2+) site is built by C2179, C2253, C2260, and C2263.

The protein in the N-terminal section; belongs to the RNA polymerase beta chain family. In the C-terminal section; belongs to the RNA polymerase beta' chain family. In terms of assembly, the RNAP catalytic core consists of 2 alpha, 1 beta/beta' and 1 omega subunit. When a sigma factor is associated with the core the holoenzyme is formed, which can initiate transcription. The cofactor is Mg(2+). It depends on Zn(2+) as a cofactor.

The catalysed reaction is RNA(n) + a ribonucleoside 5'-triphosphate = RNA(n+1) + diphosphate. In terms of biological role, DNA-dependent RNA polymerase catalyzes the transcription of DNA into RNA using the four ribonucleoside triphosphates as substrates. The protein is Bifunctional DNA-directed RNA polymerase subunit beta-beta' (rpoBC) of Helicobacter pylori (strain J99 / ATCC 700824) (Campylobacter pylori J99).